The chain runs to 242 residues: DNA repair protein RecO (242 aa).

The protein belongs to the RecO family. In terms of assembly, monomer.

Functionally, involved in DNA repair and RecF pathway recombination. The polypeptide is DNA repair protein RecO (Shigella dysenteriae serotype 1 (strain Sd197)).